A 105-amino-acid polypeptide reads, in one-letter code: Large ribosomal subunit protein uL24 (105 aa).

It belongs to the universal ribosomal protein uL24 family. Part of the 50S ribosomal subunit.

Functionally, one of two assembly initiator proteins, it binds directly to the 5'-end of the 23S rRNA, where it nucleates assembly of the 50S subunit. In terms of biological role, one of the proteins that surrounds the polypeptide exit tunnel on the outside of the subunit. The protein is Large ribosomal subunit protein uL24 of Clostridium kluyveri (strain ATCC 8527 / DSM 555 / NBRC 12016 / NCIMB 10680 / K1).